A 210-amino-acid chain; its full sequence is Redox-sensing transcriptional repressor Rex (210 aa).

Residues 17–56 (KYYRYLAELMDNDVDRISSKELSEKIGFTASQIRQDLNNF) constitute a DNA-binding region (H-T-H motif). 91–96 (GAGNIG) contributes to the NAD(+) binding site.

It belongs to the transcriptional regulatory Rex family. Homodimer.

The protein localises to the cytoplasm. Its function is as follows. Modulates transcription in response to changes in cellular NADH/NAD(+) redox state. This chain is Redox-sensing transcriptional repressor Rex, found in Clostridium novyi (strain NT).